The chain runs to 298 residues: Glycine--tRNA ligase alpha subunit (298 aa).

Belongs to the class-II aminoacyl-tRNA synthetase family. As to quaternary structure, tetramer of two alpha and two beta subunits.

The protein resides in the cytoplasm. It carries out the reaction tRNA(Gly) + glycine + ATP = glycyl-tRNA(Gly) + AMP + diphosphate. This Helicobacter acinonychis (strain Sheeba) protein is Glycine--tRNA ligase alpha subunit.